Consider the following 1427-residue polypeptide: MHQRHPRARCPPLCVAGILACGFLLGCWGPSHFQQSCLQALEPQAVSSYLSPGAPLKGRPPSPGFQRQRQRQRRAAGGILHLELLVAVGPDVFQAHQEDTERYVLTNLNIGAELLRDPSLGAQFRVHLVKMVILTEPEGAPNITANLTSSLLSVCGWSQTINPEDDTDPGHADLVLYITRFDLELPDGNRQVRGVTQLGGACSPTWSCLITEDTGFDLGVTIAHEIGHSFGLEHDGAPGSGCGPSGHVMASDGAAPRAGLAWSPCSRRQLLSLLSAGRARCVWDPPRPQPGSAGHPPDAQPGLYYSANEQCRVAFGPKAVACTFAREHLDMCQALSCHTDPLDQSSCSRLLVPLLDGTECGVEKWCSKGRCRSLVELTPIAAVHGRWSSWGPRSPCSRSCGGGVVTRRRQCNNPRPAFGGRACVGADLQAEMCNTQACEKTQLEFMSQQCARTDGQPLRSSPGGASFYHWGAAVPHSQGDALCRHMCRAIGESFIMKRGDSFLDGTRCMPSGPREDGTLSLCVSGSCRTFGCDGRMDSQQVWDRCQVCGGDNSTCSPRKGSFTAGRAREYVTFLTVTPNLTSVYIANHRPLFTHLAVRIGGRYVVAGKMSISPNTTYPSLLEDGRVEYRVALTEDRLPRLEEIRIWGPLQEDADIQVYRRYGEEYGNLTRPDITFTYFQPKPRQAWVWAAVRGPCSVSCGAGLRWVNYSCLDQARKELVETVQCQGSQQPPAWPEACVLEPCPPYWAVGDFGPCSASCGGGLRERPVRCVEAQGSLLKTLPPARCRAGAQQPAVALETCNPQPCPARWEVSEPSSCTSAGGAGLALENETCVPGADGLEAPVTEGPGSVDEKLPAPEPCVGMSCPPGWGHLDATSAGEKAPSPWGSIRTGAQAAHVWTPAAGSCSVSCGRGLMELRFLCMDSALRVPVQEELCGLASKPGSRREVCQAVPCPARWQYKLAACSVSCGRGVVRRILYCARAHGEDDGEEILLDTQCQGLPRPEPQEACSLEPCPPRWKVMSLGPCSASCGLGTARRSVACVQLDQGQDVEVDEAACAALVRPEASVPCLIADCTYRWHVGTWMECSVSCGDGIQRRRDTCLGPQAQAPVPADFCQHLPKPVTVRGCWAGPCVGQGTPSLVPHEEAAAPGRTTATPAGASLEWSQARGLLFSPAPQPRRLLPGPQENSVQSSACGRQHLEPTGTIDMRGPGQADCAVAIGRPLGEVVTLRVLESSLNCSAGDMLLLWGRLTWRKMCRKLLDMTFSSKTNTLVVRQRCGRPGGGVLLRYGSQLAPETFYRECDMQLFGPWGEIVSPSLSPATSNAGGCRLFINVAPHARIAIHALATNMGAGTEGANASYILIRDTHSLRTTAFHGQQVLYWESESSQAEMEFSEGFLKAQASLRGQYWTLQSWVPEMQDPQSWKGKEGT.

An N-terminal signal peptide occupies residues 1–29 (MHQRHPRARCPPLCVAGILACGFLLGCWG). A propeptide spanning residues 30–74 (PSHFQQSCLQALEPQAVSSYLSPGAPLKGRPPSPGFQRQRQRQRR) is cleaved from the precursor. The segment at 51–70 (SPGAPLKGRPPSPGFQRQRQ) is disordered. A Peptidase M12B domain is found at 80-286 (LHLELLVAVG…GRARCVWDPP (207 aa)). Ca(2+) is bound at residue E83. N-linked (GlcNAc...) asparagine glycosylation is found at N142 and N146. Intrachain disulfides connect C155-C208, C202-C281, and C242-C265. 5 residues coordinate Ca(2+): D173, D182, E184, D187, and E212. H224 lines the Zn(2+) pocket. E225 is a catalytic residue. Zn(2+) contacts are provided by H228 and H234. Ca(2+) is bound by residues C281 and D284. The 97-residue stretch at 287 to 383 (RPQPGSAGHP…LVELTPIAAV (97 aa)) folds into the Disintegrin domain. 4 cysteine pairs are disulfide-bonded: C311–C337, C322–C347, C332–C366, and C360–C371. Residues 384 to 439 (HGRWSSWGPRSPCSRSCGGGVVTRRRQCNNPRPAFGGRACVGADLQAEMCNTQACE) enclose the TSP type-1 1 domain. W387 carries a C-linked (Man) tryptophan glycan. 8 cysteine pairs are disulfide-bonded: C396–C433, C400–C438, C411–C423, C450–C487, C483–C522, C508–C527, C532–C548, and C545–C555. An O-linked (Fuc...) serine glycan is attached at S399. Positions 440–556 (KTQLEFMSQQ…VCGGDNSTCS (117 aa)) are cysteine-rich. The short motif at 498–500 (RGD) is the Cell attachment site element. 3 N-linked (GlcNAc...) asparagine glycosylation sites follow: N552, N579, and N614. Residues 556 to 685 (SPRKGSFTAG…TYFQPKPRQA (130 aa)) are spacer. An N-linked (GlcNAc...) (complex) asparagine glycan is attached at N667. 7 TSP type-1 domains span residues 682 to 730 (PRQA…SQQP), 742 to 805 (CPPY…QPCP), 808 to 859 (WEVS…PEPC), 896 to 950 (VWTP…QAVP), 951 to 1011 (CPAR…SLEP), 1012 to 1068 (CPPR…VPCL), and 1072 to 1131 (CTYR…GPCV). A glycan (O-linked (Fuc...) serine) is linked at S698. N707 is a glycosylation site (N-linked (GlcNAc...) (complex) asparagine). S757 carries O-linked (Fuc...) serine glycosylation. N828 carries N-linked (GlcNAc...) asparagine glycosylation. 4 O-linked (Fuc...) serine glycosylation sites follow: S907, S965, S1027, and S1087. 2 CUB domains span residues 1192-1298 (CGRQ…FYRE) and 1299-1427 (CDMQ…KEGT). 2 N-linked (GlcNAc...) asparagine glycosylation sites follow: N1235 and N1354.

Requires Zn(2+) as cofactor. It depends on Ca(2+) as a cofactor. Post-translationally, glycosylated. O-fucosylated by POFUT2 on a serine or a threonine residue found within the consensus sequence C1-X(2)-(S/T)-C2-G of the TSP type-1 repeat domains where C1 and C2 are the first and second cysteine residue of the repeat, respectively. Fucosylated repeats can then be further glycosylated by the addition of a beta-1,3-glucose residue by the glucosyltransferase, B3GALTL. Fucosylation mediates the efficient secretion of ADAMTS13. May also be C-glycosylated on tryptophan residues within the consensus sequence W-X-X-W of the TPRs, and also N-glycosylated. These other glycosylations can also facilitate secretion. In terms of processing, the precursor is processed by a furin endopeptidase which cleaves off the pro-domain. As to expression, plasma. Expressed primarily in liver.

It localises to the secreted. The enzyme catalyses The enzyme cleaves the von Willebrand factor at bond 842-Tyr-|-Met-843 within the A2 domain.. With respect to regulation, zinc and calcium ions cooperatively modulate enzyme activity. The cleavage of the pro-domain is not required for protease activity. Dependence on calcium for proteolytic activity is mediated by the high affinity site. Functionally, cleaves the vWF multimers in plasma into smaller forms thereby controlling vWF-mediated platelet thrombus formation. The protein is A disintegrin and metalloproteinase with thrombospondin motifs 13 (ADAMTS13) of Homo sapiens (Human).